Reading from the N-terminus, the 355-residue chain is Guanine nucleotide-binding protein G(i) subunit alpha-2 (355 aa).

Gly-2 carries the N-myristoyl glycine lipid modification. Residue Cys-3 is the site of S-palmitoyl cysteine attachment. The 324-residue stretch at 32 to 355 folds into the G-alpha domain; it reads REVKLLLLGA…KNNLKDCGLF (324 aa). The segment at 35 to 48 is G1 motif; it reads KLLLLGAGESGKST. GTP contacts are provided by residues 40-47, 176-182, 201-205, 270-273, and Ala-327; these read GAGESGKS, LRTRVKT, DVGGQ, and NKKD. Mg(2+) is bound by residues Ser-47 and Thr-182. The interval 174 to 182 is G2 motif; sequence DVLRTRVKT. The G3 motif stretch occupies residues 197 to 206; it reads FKMFDVGGQR. The segment at 266–273 is G4 motif; that stretch reads ILFLNKKD. The G5 motif stretch occupies residues 325 to 330; the sequence is TCATDT.

Belongs to the G-alpha family. G(i/o/t/z) subfamily. In terms of assembly, g proteins are composed of 3 units; alpha, beta and gamma. The alpha chain contains the guanine nucleotide binding site. In this context, interacts with GNB2. Interacts with UNC5B. Interacts with GPSM1. Interacts with RGS12 and RGS14. Interacts (inactive GDP-bound form) with NUCB1 (via GBA motif); the interaction leads to activation of GNAI3. Interacts (inactive GDP-bound form) with CCDC88C/DAPLE (via GBA motif). Interacts (inactive GDP-bound form) with CCDC8A/GIV (via GBA motif). Interacts with CXCR1 and CXCR2.

Its subcellular location is the cytoplasm. The protein localises to the cytoskeleton. It localises to the microtubule organizing center. It is found in the centrosome. The protein resides in the cell membrane. Its subcellular location is the membrane. Guanine nucleotide-binding proteins (G proteins) are involved as modulators or transducers in various transmembrane signaling systems. The G(i) proteins are involved in hormonal regulation of adenylate cyclase: they inhibit the cyclase in response to beta-adrenergic stimuli. May play a role in cell division. This Mus musculus (Mouse) protein is Guanine nucleotide-binding protein G(i) subunit alpha-2 (Gnai2).